Here is a 308-residue protein sequence, read N- to C-terminus: N-acetylgalactosamine kinase AgaK (308 aa).

ATP contacts are provided by residues 4 to 11 and 132 to 139; these read GLDIGGTK and GTGGGLCI. Residues His156, Cys174, Cys176, and Cys181 each coordinate Zn(2+).

This sequence belongs to the ROK (NagC/XylR) family.

The protein resides in the cytoplasm. The enzyme catalyses N-acetyl-D-galactosamine + ATP = N-acetyl-D-galactosamine 6-phosphate + ADP + H(+). It carries out the reaction N-acetyl-D-glucosamine + ATP = N-acetyl-D-glucosamine 6-phosphate + ADP + H(+). Functionally, involved in the pathway of N-acetyl-D-galactosamine degradation. Catalyzes the phosphorylation of N-acetyl-D-galactosamine (GalNAc) to yield D-galactosamine 6-phosphate (GalN-6-P). It can also phosphorylate N-acetylglucosamine (GlcNAc). The protein is N-acetylgalactosamine kinase AgaK of Shewanella sp. (strain ANA-3).